The sequence spans 328 residues: Biotin synthase (328 aa).

The Radical SAM core domain maps to 41-260; that stretch reads TAIETASLLS…VALARILMPA (220 aa). Positions 56, 60, and 63 each coordinate [4Fe-4S] cluster. [2Fe-2S] cluster is bound by residues cysteine 100, cysteine 131, cysteine 191, and arginine 264.

Belongs to the radical SAM superfamily. Biotin synthase family. Homodimer. [4Fe-4S] cluster is required as a cofactor. Requires [2Fe-2S] cluster as cofactor.

The catalysed reaction is (4R,5S)-dethiobiotin + (sulfur carrier)-SH + 2 reduced [2Fe-2S]-[ferredoxin] + 2 S-adenosyl-L-methionine = (sulfur carrier)-H + biotin + 2 5'-deoxyadenosine + 2 L-methionine + 2 oxidized [2Fe-2S]-[ferredoxin]. It functions in the pathway cofactor biosynthesis; biotin biosynthesis; biotin from 7,8-diaminononanoate: step 2/2. Catalyzes the conversion of dethiobiotin (DTB) to biotin by the insertion of a sulfur atom into dethiobiotin via a radical-based mechanism. The polypeptide is Biotin synthase (Cereibacter sphaeroides (strain ATCC 17023 / DSM 158 / JCM 6121 / CCUG 31486 / LMG 2827 / NBRC 12203 / NCIMB 8253 / ATH 2.4.1.) (Rhodobacter sphaeroides)).